The following is a 203-amino-acid chain: V-type ATP synthase subunit D (203 aa).

Belongs to the V-ATPase D subunit family.

Functionally, produces ATP from ADP in the presence of a proton gradient across the membrane. This chain is V-type ATP synthase subunit D (atpD), found in Chlamydia muridarum (strain MoPn / Nigg).